Here is a 220-residue protein sequence, read N- to C-terminus: Uracil-DNA glycosylase (220 aa).

The active-site Proton acceptor is D61.

Belongs to the uracil-DNA glycosylase (UDG) superfamily. UNG family.

Its subcellular location is the cytoplasm. It catalyses the reaction Hydrolyzes single-stranded DNA or mismatched double-stranded DNA and polynucleotides, releasing free uracil.. Its function is as follows. Excises uracil residues from the DNA which can arise as a result of misincorporation of dUMP residues by DNA polymerase or due to deamination of cytosine. The polypeptide is Uracil-DNA glycosylase (Pseudoalteromonas translucida (strain TAC 125)).